We begin with the raw amino-acid sequence, 135 residues long: MLSPKRTRFRKQHRGRMKGISYRGNHISFGKYALQALEPAWITSRQIEAGRRAMTRNARRGGKIWVRIFPDKPVTVRPAETRMGSGKGSPEYWVAVVKPGRILYEMGGVTENIARKAISIASSKMPIRTQFIISA.

Belongs to the universal ribosomal protein uL16 family. As to quaternary structure, part of the 50S ribosomal subunit.

It is found in the plastid. The protein resides in the chloroplast. The polypeptide is Large ribosomal subunit protein uL16c (Panax ginseng (Korean ginseng)).